The primary structure comprises 163 residues: Retinoic acid receptor responder protein 2 (163 aa).

A signal peptide spans 1 to 20; it reads MRRLLIPLALWLGAVGVGVA. 3 disulfide bridges follow: cysteine 77/cysteine 87, cysteine 98/cysteine 117, and cysteine 101/cysteine 135. Residues 158 to 163 constitute a propeptide that is removed on maturation; sequence KALPRS.

Post-translationally, secreted in an inactive precursor form, prochemerin, which is proteolytically processed by a variety of extracellular proteases to generate forms with differing levels of bioactivity. For example, the removal of six amino acids results in chemerin-157, which exhibits the highest activity, while removal of seven amino acids results in chemerin-156 which has slightly less activity. Some proteases are able to cleave at more than one site and chemerin forms may be sequentially processed by different enzymes to modulate activity levels. The coordinated expression and activity of chemerin-modifying enzymes is essential for regulating its bioactivation, inactivation and, consequently, biological function. Cathepsin G cleaves seven C-terminal amino acids from prochemerin (chemerin-156), elastase is able to cleave six (chemerin-157), eight (chemerin-155) or eleven (chemerin-152), plasmin cleaves five amino acids (chemerin-158), and tryptase cleaves five (chemerin-158) or eight (chemerin-155). Multiple cleavages might be required to fully activate chemerin, with an initial tryptase cleavage resulting in chemerin with low activity (chemerin-158), and a second cleavage by carboxypeptidase N or B producing highly active chemerin (chemerin-157).

The protein resides in the secreted. Adipocyte-secreted protein (adipokine) that regulates adipogenesis, metabolism and inflammation through activation of the chemokine-like receptor 1 (CMKLR1). Also acts as a ligand for CMKLR2. Can also bind to C-C chemokine receptor-like 2 (CCRL2), but with a lower affinity than it does to CMKLR1 or CMKLR2. Positively regulates adipocyte differentiation, modulates the expression of adipocyte genes involved in lipid and glucose metabolism and might play a role in angiogenesis, a process essential for the expansion of white adipose tissue. Also acts as a pro-inflammatory adipokine, causing an increase in secretion of pro-inflammatory and prodiabetic adipokines, which further impair adipose tissue metabolic function and have negative systemic effects including impaired insulin sensitivity, altered glucose and lipid metabolism, and a decrease in vascular function in other tissues. Can have both pro- and anti-inflammatory properties depending on the modality of enzymatic cleavage by different classes of proteases. Acts as a chemotactic factor for leukocyte populations expressing CMKLR1, particularly immature plasmacytoid dendritic cells, but also immature myeloid DCs, macrophages and natural killer cells. Exerts an anti-inflammatory role by preventing TNF/TNFA-induced VCAM1 expression and monocytes adhesion in vascular endothelial cells. The effect is mediated via inhibiting activation of NF-kappa-B and CRK/p38 through stimulation of AKT1/NOS3 signaling and nitric oxide production. Exhibits an antimicrobial function in the skin. The chain is Retinoic acid receptor responder protein 2 (RARRES2) from Pongo abelii (Sumatran orangutan).